The chain runs to 394 residues: Elongation factor Tu (394 aa).

The tr-type G domain maps to 10-204 (KPHVNVGTIG…AVDSYIPQPE (195 aa)). The segment at 19 to 26 (GHVDHGKT) is G1. 19–26 (GHVDHGKT) contributes to the GTP binding site. Thr26 provides a ligand contact to Mg(2+). The tract at residues 60–64 (GITIS) is G2. Residues 81–84 (DCPG) form a G3 region. GTP contacts are provided by residues 81-85 (DCPGH) and 136-139 (NKCD). The tract at residues 136–139 (NKCD) is G4. Positions 174-176 (SAV) are G5.

Belongs to the TRAFAC class translation factor GTPase superfamily. Classic translation factor GTPase family. EF-Tu/EF-1A subfamily. In terms of assembly, monomer.

The protein localises to the cytoplasm. The catalysed reaction is GTP + H2O = GDP + phosphate + H(+). GTP hydrolase that promotes the GTP-dependent binding of aminoacyl-tRNA to the A-site of ribosomes during protein biosynthesis. The polypeptide is Elongation factor Tu (Akkermansia muciniphila (strain ATCC BAA-835 / DSM 22959 / JCM 33894 / BCRC 81048 / CCUG 64013 / CIP 107961 / Muc)).